The primary structure comprises 530 residues: tRNA-2-methylthio-N(6)-dimethylallyladenosine synthase (530 aa).

Positions 19–134 (RTYEVRTYGC…LPTLLERARH (116 aa)) constitute an MTTase N-terminal domain. Residues Cys28, Cys63, Cys97, Cys171, Cys175, and Cys178 each coordinate [4Fe-4S] cluster. The region spanning 157-387 (RDEIASGWVS…TALQERISHE (231 aa)) is the Radical SAM core domain. Residues 390–460 (QRVVGRTVEV…PFHLIADSVD (71 aa)) enclose the TRAM domain. A disordered region spans residues 509 to 530 (VPTTASTSAPVGDGSAHPRHRA).

The protein belongs to the methylthiotransferase family. MiaB subfamily. As to quaternary structure, monomer. It depends on [4Fe-4S] cluster as a cofactor.

The protein resides in the cytoplasm. It catalyses the reaction N(6)-dimethylallyladenosine(37) in tRNA + (sulfur carrier)-SH + AH2 + 2 S-adenosyl-L-methionine = 2-methylsulfanyl-N(6)-dimethylallyladenosine(37) in tRNA + (sulfur carrier)-H + 5'-deoxyadenosine + L-methionine + A + S-adenosyl-L-homocysteine + 2 H(+). In terms of biological role, catalyzes the methylthiolation of N6-(dimethylallyl)adenosine (i(6)A), leading to the formation of 2-methylthio-N6-(dimethylallyl)adenosine (ms(2)i(6)A) at position 37 in tRNAs that read codons beginning with uridine. In Clavibacter sepedonicus (Clavibacter michiganensis subsp. sepedonicus), this protein is tRNA-2-methylthio-N(6)-dimethylallyladenosine synthase.